A 712-amino-acid chain; its full sequence is 3',5'-cyclic-AMP phosphodiesterase 4C (712 aa).

Disordered regions lie at residues 1 to 31 (MENLGVGEGAEACSRLSRSRGRHSMTRAPKH) and 45 to 64 (RFYSDPDKSAGCRERDLSPR). Residues 17 to 31 (SRSRGRHSMTRAPKH) are compositionally biased toward basic residues. Residues 48–64 (SDPDKSAGCRERDLSPR) show a composition bias toward basic and acidic residues. Ser73 bears the Phosphoserine mark. Residues 181–200 (AKQGPVGNPSSSNQLPPAED) form a disordered region. In terms of domain architecture, PDEase spans 312-641 (VQTDQEEQLA…EWYQSKIPRS (330 aa)). His388 (proton donor) is an active-site residue. His388 contributes to the 3',5'-cyclic AMP binding site. Positions 388 and 392 each coordinate AMP. Positions 392, 428, 429, and 546 each coordinate Zn(2+). Residues Asp429, Asp546, Gln597, and Phe600 each coordinate AMP. Asp429 is a Mg(2+) binding site. Residue Asp429 participates in Mn(2+) binding. Positions 597 and 600 each coordinate 3',5'-cyclic AMP. Disordered regions lie at residues 636–655 (SKIPRSPSDLTNPERDGPDR) and 664–712 (EAEE…NQRT). Ser641 is modified (phosphoserine). The span at 664–678 (EAEEEDEEEEEEGEE) shows a compositional bias: acidic residues.

The protein belongs to the cyclic nucleotide phosphodiesterase family. PDE4 subfamily. Part of a complex containing AKAP5, ADCY5, ADCY6 and PKD2. Requires Zn(2+) as cofactor. The cofactor is Mg(2+). Mn(2+) serves as cofactor. In terms of tissue distribution, expressed in various tissues but not in cells of the immune system.

It is found in the cell projection. It localises to the cilium. The enzyme catalyses 3',5'-cyclic AMP + H2O = AMP + H(+). It functions in the pathway purine metabolism; 3',5'-cyclic AMP degradation; AMP from 3',5'-cyclic AMP: step 1/1. With respect to regulation, inhibited by rolipram. In terms of biological role, hydrolyzes the second messenger cAMP, which is a key regulator of many important physiological processes. This Homo sapiens (Human) protein is 3',5'-cyclic-AMP phosphodiesterase 4C.